Reading from the N-terminus, the 950-residue chain is Protein lin-54 homolog (950 aa).

Disordered stretches follow at residues 1–63, 366–387, 500–523, 533–552, and 638–702; these read MDTS…DSLN, NASA…TSSG, ASKP…PRKH, KQSA…GPEA, and VENK…LPPG. Positions 10 to 26 are enriched in acidic residues; the sequence is SLDDTEPLPELSFEDFL. Residues 29–39 show a composition bias toward basic and acidic residues; that stretch reads TSEKSSQHMEI. The segment covering 40–55 has biased composition (acidic residues); sequence EALDSEEDNIGGEDLA. Composition is skewed to low complexity over residues 366 to 386, 500 to 516, 535 to 548, and 661 to 682; these read NASA…STSS, ASKP…PSAS, SASV…SSDA, and QQQS…QQQL. The CRC domain maps to 737 to 849; sequence RRKHCNCSKS…KCVGCRNMED (113 aa).

It belongs to the lin-54 family. Component of the DREAM complex at least composed of Myb, Caf1-55, mip40, mip120, mip130, E2f2, Dp, Rbf, Rbf2, lin-52, HDAC1/Rpd3 and l(3)mbt.

It localises to the nucleus. Its function is as follows. Component of the DREAM complex, a multiprotein complex that can both act as a transcription activator or repressor depending on the context. In follicle cells, the complex plays a central role in the site-specific DNA replication at the chorion loci. During development, the complex represses transcription of developmentally controlled E2F target genes. The chain is Protein lin-54 homolog (mip120) from Drosophila melanogaster (Fruit fly).